Reading from the N-terminus, the 354-residue chain is Galactose-1-phosphate uridylyltransferase (354 aa).

The disordered stretch occupies residues 36–72 (TVTTSEVRRDPLLGDSAPSRLAPQGRTYHPPADQCPL). Positions 70, 73, and 114 each coordinate Zn(2+). N154 serves as a coordination point for UDP-alpha-D-glucose. H165 contacts Zn(2+). The active-site Tele-UMP-histidine intermediate is H167. UDP-alpha-D-glucose contacts are provided by Q169 and Q332.

It belongs to the galactose-1-phosphate uridylyltransferase type 1 family. Zn(2+) is required as a cofactor.

The enzyme catalyses alpha-D-galactose 1-phosphate + UDP-alpha-D-glucose = alpha-D-glucose 1-phosphate + UDP-alpha-D-galactose. Its pathway is carbohydrate metabolism; galactose metabolism. This is Galactose-1-phosphate uridylyltransferase (galT) from Streptomyces lividans.